A 1131-amino-acid polypeptide reads, in one-letter code: PPi-type phosphoenolpyruvate carboxykinase (1131 aa).

Belongs to the PPi-type phosphoenolpyruvate carboxykinase family. In terms of assembly, monomer and trimer; forms heterotrimers with PEPCK2 and PEPCK3.

The catalysed reaction is oxaloacetate + diphosphate = phosphoenolpyruvate + phosphate + CO2. Functionally, inorganic pyrophosphate (PPi)-dependent phosphoenolpyruvate carboxykinase, which regulates the carbon flow of the central metabolism by fixing CO(2) to phosphoenolpyruvate to produce oxaloacetate. Can also produce pyruvate and diphosphate from phosphoenolpyruvate and phosphate. The protein is PPi-type phosphoenolpyruvate carboxykinase of Propionibacterium freudenreichii subsp. freudenreichii.